We begin with the raw amino-acid sequence, 405 residues long: MVCRNVSRQQFRAIMIITSLLDTDLYKFSMMQVVLHHFPAAQVEYRYKCRTPGINLRPYLDEIRAEVHELCQLRFTSEELDYLRGLRFIKSDFVDFLGLFHLPERCIFIGEGEQPGEISITVKGPWLHTILFEIPVLAIVNEVYFRNTRRNPDWEEGRKRLQSKMNLVLDDPALADFRVAEYGTRRRFSKVWHEEIVSTMKARMGVHFAGTSNVLLAMRHGVLPLGTMGHEYLQACQALGPRLRDSQVFALEVWAKEYRGDLGIALSDVYGMDAFLRDFDMYFCKLFDGARHDSGDPFVWGERLLEHYRANRADPRAKTLVFSDSLTFPRAIELARQFAGRCKVSFGIGTNLTNDLGHEPLQIVMKMVRCNGQPVAKVSDAPEKTMCDDPAYLAYLRQVFQLPPA.

A Phosphohistidine; by autocatalysis modification is found at His230.

Belongs to the NAPRTase family. Post-translationally, transiently phosphorylated on a His residue during the reaction cycle. Phosphorylation strongly increases the affinity for substrates and increases the rate of nicotinate D-ribonucleotide production. Dephosphorylation regenerates the low-affinity form of the enzyme, leading to product release.

It carries out the reaction nicotinate + 5-phospho-alpha-D-ribose 1-diphosphate + ATP + H2O = nicotinate beta-D-ribonucleotide + ADP + phosphate + diphosphate. It functions in the pathway cofactor biosynthesis; NAD(+) biosynthesis; nicotinate D-ribonucleotide from nicotinate: step 1/1. Functionally, catalyzes the synthesis of beta-nicotinate D-ribonucleotide from nicotinate and 5-phospho-D-ribose 1-phosphate at the expense of ATP. In Bordetella bronchiseptica (strain ATCC BAA-588 / NCTC 13252 / RB50) (Alcaligenes bronchisepticus), this protein is Nicotinate phosphoribosyltransferase.